The following is a 206-amino-acid chain: Ras-related protein Rab7 (206 aa).

GTP is bound by residues 15–22 (GDSGVGKT), 63–67 (DTAGQ), and 125–128 (NKID). Residues Cys-204 and Cys-206 are each lipidated (S-geranylgeranyl cysteine). Position 206 is a cysteine methyl ester (Cys-206).

The protein belongs to the small GTPase superfamily. Rab family.

It is found in the cell membrane. In terms of biological role, protein transport. Probably involved in vesicular traffic. The chain is Ras-related protein Rab7 from Pisum sativum (Garden pea).